Reading from the N-terminus, the 485-residue chain is MTITPQNLIALLPLLIVGLTVVVVMLSIAWRRNHFLNATLSVIGLNAALVSLWFVGQAGAMDVTPLMRVDGFAMLYTGLVLLASLATCTFAYPWLEGYNDNKDEFYLLVLIAALGGILLANANHLASLFLGIELISLPLFGLVGYAFRQKRSLEASIKYTILSAAASSFLLFGMALVYAQSGDLSFVALGKNLGDGMLNEPLLLAGFGLMIVGLGFKLSLVPFHLWTPDVYQGAPAPVSTFLATASKIAIFGVVMRLFLYAPVGDSEAIRVVLAIIAFASIIFGNLMALSQTNIKRLLGYSSISHLGYLLVALIALQTGEMSMEAVGVYLAGYLFSSLGAFGVVSLMSSPYRGPDADSLFSYRGLFWHRPILAAVMTVMMLSLAGIPMTLGFIGKFYVLAVGVQAHLWWLVGAVVVGSAIGLYYYLRVAVSLYLHAPEQPGRDAPSNWQYSAGGIVVLISALLVLVLGIWPQPLISIVRLAMPLM.

14 helical membrane-spanning segments follow: residues 8-28, 35-55, 71-91, 105-125, 127-147, 159-179, 203-223, 235-255, 271-291, 297-317, 326-346, 373-393, 408-430, and 455-475; these read LIAL…MLSI, FLNA…LWFV, GFAM…CTFA, FYLL…ANHL, SLFL…GYAF, YTIL…LVYA, LLAG…LVPF, PAPV…GVVM, VVLA…ALSQ, LLGY…IALQ, VGVY…VVSL, AAVM…LGFI, WWLV…RVAV, and IVVL…QPLI.

The protein belongs to the complex I subunit 2 family. As to quaternary structure, NDH-1 is composed of 13 different subunits. Subunits NuoA, H, J, K, L, M, N constitute the membrane sector of the complex.

The protein localises to the cell inner membrane. The enzyme catalyses a quinone + NADH + 5 H(+)(in) = a quinol + NAD(+) + 4 H(+)(out). In terms of biological role, NDH-1 shuttles electrons from NADH, via FMN and iron-sulfur (Fe-S) centers, to quinones in the respiratory chain. The immediate electron acceptor for the enzyme in this species is believed to be ubiquinone. Couples the redox reaction to proton translocation (for every two electrons transferred, four hydrogen ions are translocated across the cytoplasmic membrane), and thus conserves the redox energy in a proton gradient. The chain is NADH-quinone oxidoreductase subunit N from Escherichia coli O7:K1 (strain IAI39 / ExPEC).